The primary structure comprises 1567 residues: Ice nucleation protein (1567 aa).

Positions 130-185 (PAAEPSAPATQATSATLPTPATPSTQATPSTQSTQSTQSTEATQSTEATPVATVAA) are enriched in low complexity. Disordered stretches follow at residues 130–195 (PAAE…QQHD), 270–329 (YGST…KGSD), 356–378 (AGSE…GSDV), 449–474 (TQTS…GSDI), 502–529 (SESS…YGST), 594–620 (QTAG…DVTA), 642–668 (QTSG…DVTA), 689–716 (TQTS…DVTA), 738–764 (QTSG…DVTA), 785–810 (TQTS…GSDI), 833–860 (TQTS…DVTA), 929–959 (TQTS…AGYG), and 977–1004 (TQTS…DVTA). Residues 270-282 (YGSTQTAQEGSRL) show a composition bias toward polar residues. Over residues 283 to 296 (TSGYGSTATSGSDS) the composition is skewed to low complexity. Polar residues-rich tracts occupy residues 302-325 (YGST…QTAR), 356-373 (AGSE…QTAR), 449-469 (TQTS…QTAR), and 502-519 (SESS…AQQD). The span at 520-529 (SSLTTGYGST) shows a compositional bias: low complexity. Polar residues-rich tracts occupy residues 594 to 613 (QTAG…QTAR), 642 to 661 (QTSG…QTAR), 689 to 709 (TQTS…QTAR), 738 to 757 (QTSG…QTAR), 785 to 805 (TQTS…QTAR), 833 to 853 (TQTS…QTAR), 929 to 949 (TQTS…QTAR), and 977 to 997 (TQTS…QTAR).

The protein belongs to the bacterial ice nucleation protein family.

It is found in the cell outer membrane. Functionally, ice nucleation proteins enable bacteria to nucleate crystallization in supercooled water. In Xanthomonas campestris pv. translucens, this protein is Ice nucleation protein (inaX).